The primary structure comprises 70 residues: Alpha-toxin Bot9 (70 aa).

The LCN-type CS-alpha/beta domain maps to arginine 6–tyrosine 69. 4 disulfide bridges follow: cysteine 16/cysteine 68, cysteine 20/cysteine 40, cysteine 26/cysteine 50, and cysteine 30/cysteine 52.

The protein belongs to the long (4 C-C) scorpion toxin superfamily. Sodium channel inhibitor family. Alpha subfamily. Expressed by the venom gland.

It is found in the secreted. In terms of biological role, alpha toxins bind voltage-independently at site-3 of sodium channels (Nav) and inhibit the inactivation of the activated channels, thereby blocking neuronal transmission. This toxin is active against rat Nav1.2/SCN2A and B.germanica Nav1. The chain is Alpha-toxin Bot9 from Buthus occitanus tunetanus (Common European scorpion).